The sequence spans 436 residues: Enolase (436 aa).

Histidine 159 and glutamate 168 together coordinate substrate. The active-site Proton donor is glutamate 211. Mg(2+) is bound by residues aspartate 246, glutamate 295, and aspartate 322. Residues glutamate 295 and aspartate 322 each coordinate substrate. The Proton acceptor role is filled by lysine 347. Residues 374-377 (SHRS) and lysine 398 each bind substrate.

Belongs to the enolase family. In terms of assembly, homodimer. Requires Mg(2+) as cofactor.

Its subcellular location is the cytoplasm. The enzyme catalyses (2R)-2-phosphoglycerate = phosphoenolpyruvate + H2O. The protein operates within carbohydrate degradation; glycolysis; pyruvate from D-glyceraldehyde 3-phosphate: step 4/5. This is Enolase from Neocallimastix frontalis (Rumen fungus).